The sequence spans 397 residues: 1-carboxy-3-chloro-3,4-dihydroxycyclo hexa-1,5-diene dehydrogenase (397 aa).

It to P.putida PHT4.

The polypeptide is 1-carboxy-3-chloro-3,4-dihydroxycyclo hexa-1,5-diene dehydrogenase (cbaC) (Comamonas testosteroni (Pseudomonas testosteroni)).